A 138-amino-acid polypeptide reads, in one-letter code: Superoxide dismutase [Mn] (138 aa).

Mn(2+) is bound by residues Gln1, His49, Asp133, and His137.

Belongs to the iron/manganese superoxide dismutase family. Requires Mn(2+) as cofactor.

The catalysed reaction is 2 superoxide + 2 H(+) = H2O2 + O2. Destroys superoxide anion radicals which are normally produced within the cells and which are toxic to biological systems. In Mycobacteroides chelonae (Mycobacterium chelonae), this protein is Superoxide dismutase [Mn] (sodA).